Consider the following 375-residue polypeptide: UDP-N-acetylglucosamine--N-acetylmuramyl-(pentapeptide) pyrophosphoryl-undecaprenol N-acetylglucosamine transferase (375 aa).

UDP-N-acetyl-alpha-D-glucosamine contacts are provided by residues 13 to 15 (TGG), N124, R165, S193, and Q294.

Belongs to the glycosyltransferase 28 family. MurG subfamily.

It is found in the cell inner membrane. It carries out the reaction di-trans,octa-cis-undecaprenyl diphospho-N-acetyl-alpha-D-muramoyl-L-alanyl-D-glutamyl-meso-2,6-diaminopimeloyl-D-alanyl-D-alanine + UDP-N-acetyl-alpha-D-glucosamine = di-trans,octa-cis-undecaprenyl diphospho-[N-acetyl-alpha-D-glucosaminyl-(1-&gt;4)]-N-acetyl-alpha-D-muramoyl-L-alanyl-D-glutamyl-meso-2,6-diaminopimeloyl-D-alanyl-D-alanine + UDP + H(+). Its pathway is cell wall biogenesis; peptidoglycan biosynthesis. Functionally, cell wall formation. Catalyzes the transfer of a GlcNAc subunit on undecaprenyl-pyrophosphoryl-MurNAc-pentapeptide (lipid intermediate I) to form undecaprenyl-pyrophosphoryl-MurNAc-(pentapeptide)GlcNAc (lipid intermediate II). The sequence is that of UDP-N-acetylglucosamine--N-acetylmuramyl-(pentapeptide) pyrophosphoryl-undecaprenol N-acetylglucosamine transferase from Chelativorans sp. (strain BNC1).